We begin with the raw amino-acid sequence, 126 residues long: Profilin (126 aa).

The protein belongs to the profilin family. As to quaternary structure, occurs in many kinds of cells as a complex with monomeric actin in a 1:1 ratio.

Its subcellular location is the cytoplasm. The protein localises to the cytoskeleton. In terms of biological role, binds to actin and affects the structure of the cytoskeleton. At high concentrations, profilin prevents the polymerization of actin, whereas it enhances it at low concentrations. By binding to PIP2, it inhibits the formation of IP3 and DG. In Bombyx mori (Silk moth), this protein is Profilin.